A 4749-amino-acid polypeptide reads, in one-letter code: Dynein heavy chain domain-containing protein 1 (4749 aa).

Residues 1 to 18 are compositionally biased toward low complexity; it reads MKPHSQTSPPSLPMPSTS. 3 disordered regions span residues 1–27, 275–308, and 2690–2785; these read MKPH…TQKP, ESSD…KKSS, and ESLA…KLQS. Residues 2696-2716 are compositionally biased toward acidic residues; sequence CEEEEVEEEKVPEVESEEEIA. A compositionally biased stretch (polar residues) spans 2738-2749; sequence QATTGSFLSENS. Residues 3197-3224 are a coiled coil; sequence CQHQESLIENLVRQHDALKAQQEVFLEQ. Residues 3568–3667 are disordered; the sequence is PPKQNRSLEP…SLPSCLTVLS (100 aa). A compositionally biased stretch (basic and acidic residues) spans 3578–3593; sequence SPKESKEKFHVTKQDS. Residues 3594-3636 are a coiled coil; it reads GDNTEDELEDENNEEEDEANEQRKEQKAEENKIQGENEQEVQE. Residues 3595 to 3612 are compositionally biased toward acidic residues; sequence DNTEDELEDENNEEEDEA. The span at 3613-3628 shows a compositional bias: basic and acidic residues; that stretch reads NEQRKEQKAEENKIQG. Residues 3644 to 3655 show a composition bias toward low complexity; that stretch reads ESSGSHSSLPSE. The span at 3656–3667 shows a compositional bias: polar residues; sequence TQSLPSCLTVLS. Coiled coils occupy residues 3818–3838 and 4431–4451; these read MVRT…LEDQ and ERQL…LQAL.

This sequence belongs to the dynein heavy chain family. Expressed in spermatozoa (at protein level).

The protein resides in the cell projection. Its subcellular location is the cilium. It localises to the flagellum. Its function is as follows. Essential for the normal function of sperm flagella axonemes. This Mus musculus (Mouse) protein is Dynein heavy chain domain-containing protein 1 (Dnhd1).